The primary structure comprises 231 residues: MGDHYGFSLTTFSPSGKLMQIEYALNAVKNGQPSVGLRAKDGVVLATENVGSVLTDDQPKVEQISKHIGCVYSGMGPDFRILVKKARKIAMEYEMMYGEEMPTIQLVTDIAAVMQEYTQSGGVRPFGASLLIAGWDKNPGRPLLFQCDPSGAYFAWKATALGKNDVNAKTFLEKRFSEALELDDGIHTALLTLRESFDVGMNENNVEVAVCNSTGFHRLTKQQVHDHLGTL.

The protein belongs to the peptidase T1A family. In terms of assembly, the 26S proteasome consists of a 20S proteasome core and two 19S regulatory subunits. The 20S proteasome core is composed of 28 subunits that are arranged in four stacked rings, resulting in a barrel-shaped structure. The two end rings are each formed by seven alpha subunits, and the two central rings are each formed by seven beta subunits. The catalytic chamber with the active sites is on the inside of the barrel.

Its subcellular location is the cytoplasm. It is found in the nucleus. Its function is as follows. The proteasome is a multicatalytic proteinase complex which is characterized by its ability to cleave peptides with Arg, Phe, Tyr, Leu, and Glu adjacent to the leaving group at neutral or slightly basic pH. The proteasome has an ATP-dependent proteolytic activity. This is Proteasome subunit alpha type-2 (pas-2) from Caenorhabditis elegans.